Consider the following 343-residue polypeptide: Ribosomal RNA small subunit methyltransferase C (343 aa).

It belongs to the methyltransferase superfamily. RsmC family. As to quaternary structure, monomer.

Its subcellular location is the cytoplasm. The enzyme catalyses guanosine(1207) in 16S rRNA + S-adenosyl-L-methionine = N(2)-methylguanosine(1207) in 16S rRNA + S-adenosyl-L-homocysteine + H(+). Specifically methylates the guanine in position 1207 of 16S rRNA in the 30S particle. The polypeptide is Ribosomal RNA small subunit methyltransferase C (Escherichia coli (strain 55989 / EAEC)).